Here is a 152-residue protein sequence, read N- to C-terminus: MVKAVVVLSSSEGVSGTVQFTQEGSGPTTVTGNVSGLRPGLHGFHVHALGDTTNGCMSTGPHFNPAGKEHGAPEDETRHAGDLGNITVGDDGTATFTIIDSQIPLTGPNSIVGRAVVVHADPDDLGRGGHELSKATGNAGGRVACGVIGLQG.

Residues His45, His47, and His62 each coordinate Cu cation. A disulfide bridge connects residues Cys56 and Cys145. Zn(2+) contacts are provided by His62, His70, His79, and Asp82. His119 contacts Cu cation.

Belongs to the Cu-Zn superoxide dismutase family. In terms of assembly, homodimer. It depends on Cu cation as a cofactor. Requires Zn(2+) as cofactor.

It localises to the cytoplasm. It catalyses the reaction 2 superoxide + 2 H(+) = H2O2 + O2. In terms of biological role, destroys radicals which are normally produced within the cells and which are toxic to biological systems. The sequence is that of Superoxide dismutase [Cu-Zn] 1 (SODCC.1) from Mesembryanthemum crystallinum (Common ice plant).